The primary structure comprises 535 residues: WD repeat-containing protein 25 (535 aa).

Disordered stretches follow at residues 1 to 108 (MASL…PRPS) and 141 to 160 (DQSTFESTAGNASSSQRKRG). Residues 141–155 (DQSTFESTAGNASSS) show a composition bias toward polar residues. WD repeat units follow at residues 235 to 277 (GHRG…HCLQ), 281 to 320 (VHSEAVRAARWSPCGRRILSGGFDFALHLTDLETGTQVFS), 321 to 362 (GQSD…VVKG), 365 to 411 (ATIQ…KISN), 415 to 454 (HERYTCPSLALHPREPVFLAQTNGNYLALFSSVWPYRMSR), 460 to 501 (GHKV…RACT), and 504 to 535 (GHTQACLGTTYHPVLPSVLGTCSWGGDIKIWH).

This Mus musculus (Mouse) protein is WD repeat-containing protein 25 (Wdr25).